Reading from the N-terminus, the 149-residue chain is UPF0208 membrane protein VSAL_I2111 (149 aa).

2 helical membrane passes run 41–61 (FAVK…MVFN) and 69–89 (SIII…WLGN).

Belongs to the UPF0208 family.

The protein localises to the cell inner membrane. This Aliivibrio salmonicida (strain LFI1238) (Vibrio salmonicida (strain LFI1238)) protein is UPF0208 membrane protein VSAL_I2111.